The primary structure comprises 232 residues: Thiamine import ATP-binding protein ThiQ (232 aa).

Residues leucine 2–isoleucine 230 enclose the ABC transporter domain. An ATP-binding site is contributed by glycine 32–serine 39.

It belongs to the ABC transporter superfamily. Thiamine importer (TC 3.A.1.19.1) family. As to quaternary structure, the complex is composed of two ATP-binding proteins (ThiQ), two transmembrane proteins (ThiP) and a solute-binding protein (ThiB).

It is found in the cell inner membrane. It carries out the reaction thiamine(out) + ATP + H2O = thiamine(in) + ADP + phosphate + H(+). Part of the ABC transporter complex ThiBPQ involved in thiamine import. Responsible for energy coupling to the transport system. The polypeptide is Thiamine import ATP-binding protein ThiQ (Escherichia coli (strain UTI89 / UPEC)).